Consider the following 118-residue polypeptide: Hydrogenase maturation factor HypA (118 aa).

H2 contacts Ni(2+). Zn(2+) is bound by residues C73, C76, C93, and C96.

It belongs to the HypA/HybF family.

Involved in the maturation of [NiFe] hydrogenases. Required for nickel insertion into the metal center of the hydrogenase. The chain is Hydrogenase maturation factor HypA from Lawsonia intracellularis (strain PHE/MN1-00).